The following is a 197-amino-acid chain: Holliday junction branch migration complex subunit RuvA (197 aa).

Positions 1-63 (MYAYLKGIIT…EDAHLLYGFR (63 aa)) are domain I. The domain II stretch occupies residues 64-142 (SEDEKKLFLS…VAGDDLPAKV (79 aa)). The tract at residues 143-147 (AVQAS) is flexible linker. Positions 148–197 (AENQELEEAMEAMLALGYKATELKKIKKFFEGTTDTAENYIKSALKMLVK) are domain III.

It belongs to the RuvA family. As to quaternary structure, homotetramer. Forms an RuvA(8)-RuvB(12)-Holliday junction (HJ) complex. HJ DNA is sandwiched between 2 RuvA tetramers; dsDNA enters through RuvA and exits via RuvB. An RuvB hexamer assembles on each DNA strand where it exits the tetramer. Each RuvB hexamer is contacted by two RuvA subunits (via domain III) on 2 adjacent RuvB subunits; this complex drives branch migration. In the full resolvosome a probable DNA-RuvA(4)-RuvB(12)-RuvC(2) complex forms which resolves the HJ.

The protein resides in the cytoplasm. Functionally, the RuvA-RuvB-RuvC complex processes Holliday junction (HJ) DNA during genetic recombination and DNA repair, while the RuvA-RuvB complex plays an important role in the rescue of blocked DNA replication forks via replication fork reversal (RFR). RuvA specifically binds to HJ cruciform DNA, conferring on it an open structure. The RuvB hexamer acts as an ATP-dependent pump, pulling dsDNA into and through the RuvAB complex. HJ branch migration allows RuvC to scan DNA until it finds its consensus sequence, where it cleaves and resolves the cruciform DNA. The polypeptide is Holliday junction branch migration complex subunit RuvA (Streptococcus pneumoniae serotype 19F (strain G54)).